A 191-amino-acid polypeptide reads, in one-letter code: Protein Ves (191 aa).

The protein belongs to the Ves family.

The polypeptide is Protein Ves (Escherichia coli (strain 55989 / EAEC)).